A 343-amino-acid polypeptide reads, in one-letter code: Follistatin (343 aa).

An N-terminal signal peptide occupies residues 1-28 (MLNQRIHPGMLVLLMFLYHFMEDHTAQA). A TB domain is found at 29–102 (GNCWLRQARN…TCENVDCGPG (74 aa)). 8 disulfides stabilise this stretch: Cys-31–Cys-54, Cys-41–Cys-87, Cys-55–Cys-90, Cys-94–Cys-105, Cys-99–Cys-115, Cys-117–Cys-149, Cys-121–Cys-142, and Cys-131–Cys-163. Residues 93–116 (TCENVDCGPGKKCKMNKKNKPRCV) form the Follistatin-like 1 domain. 3 Kazal-like domains span residues 99 to 165 (CGPG…KCKK), 185 to 240 (NAYC…KCIK), and 263 to 317 (RGRC…SCNS). Asn-123 carries N-linked (GlcNAc...) asparagine glycosylation. Positions 166–189 (TCRDVLCPGSSTCVVDQTNNAYCV) constitute a Follistatin-like 2 domain. Disulfide bonds link Cys-191–Cys-224, Cys-195–Cys-217, and Cys-206–Cys-238. The Follistatin-like 3 domain maps to 243-267 (SCEDIQCSAGKKCLWDFKVGRGRCA). Cystine bridges form between Cys-269-Cys-301, Cys-273-Cys-294, and Cys-283-Cys-315. An N-linked (GlcNAc...) asparagine glycan is attached at Asn-287. The interval 315 to 343 (CNSINEDPEEEEEDEDQDYSFPISSILEW) is disordered. Over residues 320-332 (EDPEEEEEDEDQD) the composition is skewed to acidic residues.

As to quaternary structure, monomer. Ciliary ganglion neurons. Levels are higher in the iris than the choroid.

Its subcellular location is the secreted. In terms of biological role, binds directly to activin and functions as an activin antagonist. Inhibits activin A signaling in the iris and regulates somatostatin phenotype in ciliary ganglion neurons. Specific inhibitor of the biosynthesis and secretion of pituitary follicle stimulating hormone (FSH). This Gallus gallus (Chicken) protein is Follistatin (FST).